We begin with the raw amino-acid sequence, 404 residues long: MSENILTEPPRSDADNEGYVDRKRHLWILSVLWPATPIIGLYLVSQTGWSIWYGLVLILWYGLVPLIDTMLGEDYSNPPESVVPKLEQDRYYKVLTYLTVPIHYAALIISAWWVSTQPIGVFEFLALALSLGIVNGLALNTGHELGHKKETFDRWMAKLVLAVVGYGHFFIEHNKGHHRDVATPMDPATSRMGESIYTFSLREIPGAFKRAWGLEEQRLSRCGKSVWSLDNEVLQPMILTVVLYAALLAFFGPLMLIFLPIQMAFGWWQLTSANYIEHYGLLREKLPNGRYEHQKPHHSWNSNHVMSNLILFHLQRHSDHHAHPTRSYQSLRDFSDLPTLPTGYPGMFFVAFFPSWFRSLMDDRVMEWAHGDINKIQIQPGMREFYEQKFGVKGSESPDTTVAK.

4 helical membrane-spanning segments follow: residues 25-45, 47-67, 94-114, and 119-139; these read HLWILSVLWPATPIIGLYLVS, TGWSIWYGLVLILWYGLVPLI, VLTYLTVPIHYAALIISAWWV, and IGVFEFLALALSLGIVNGLAL. Positions 143 and 147 each coordinate Fe cation. The chain crosses the membrane as a helical span at residues 151–171; the sequence is TFDRWMAKLVLAVVGYGHFFI. Positions 173, 177, and 178 each coordinate Fe cation. A helical membrane pass occupies residues 241 to 261; the sequence is VVLYAALLAFFGPLMLIFLPI. Residues histidine 317, histidine 320, and histidine 321 each coordinate Fe cation.

Belongs to the fatty acid desaturase type 1 family. AlkB subfamily. Fe(3+) serves as cofactor.

It is found in the cell inner membrane. The catalysed reaction is octane + 2 reduced [rubredoxin] + O2 + 2 H(+) = 2 oxidized [rubredoxin] + octan-1-ol + H2O. It functions in the pathway hydrocarbon metabolism; alkane degradation. Functionally, catalyzes the hydroxylation of n-alkanes and fatty acids in the presence of a NADH-rubredoxin reductase and rubredoxin. It preferably hydroxylases C5-C12 hydrocarbons. In Alcanivorax borkumensis (strain ATCC 700651 / DSM 11573 / NCIMB 13689 / SK2), this protein is Alkane 1-monooxygenase 1 (alkB1).